We begin with the raw amino-acid sequence, 572 residues long: Phosphoenolpyruvate-protein phosphotransferase (572 aa).

His-190 acts as the Tele-phosphohistidine intermediate in catalysis. 2 residues coordinate phosphoenolpyruvate: Arg-297 and Arg-333. Mg(2+) is bound by residues Glu-432 and Asp-456. Phosphoenolpyruvate contacts are provided by residues 455 to 456 (ND) and Arg-466. Cys-503 (proton donor) is an active-site residue.

The protein belongs to the PEP-utilizing enzyme family. In terms of assembly, homodimer. Mg(2+) serves as cofactor.

Its subcellular location is the cytoplasm. The enzyme catalyses L-histidyl-[protein] + phosphoenolpyruvate = N(pros)-phospho-L-histidyl-[protein] + pyruvate. General (non sugar-specific) component of the phosphoenolpyruvate-dependent sugar phosphotransferase system (sugar PTS). This major carbohydrate active-transport system catalyzes the phosphorylation of incoming sugar substrates concomitantly with their translocation across the cell membrane. Enzyme I transfers the phosphoryl group from phosphoenolpyruvate (PEP) to the phosphoryl carrier protein (HPr). The sequence is that of Phosphoenolpyruvate-protein phosphotransferase (ptsI) from Listeria monocytogenes serovar 1/2a (strain ATCC BAA-679 / EGD-e).